Consider the following 1170-residue polypeptide: Disease resistance protein LAZ5 (1170 aa).

Residues 10–172 enclose the TIR domain; the sequence is ESWQVFINFR…KIIDSIKKVL (163 aa). The active site involves Glu-84. A disordered region spans residues 193-219; that stretch reads EAKNVDTFSPNSSDFPSTSIDDDLSIN. Over residues 198–219 the composition is skewed to polar residues; sequence DTFSPNSSDFPSTSIDDDLSIN. The NB-ARC domain occupies 261 to 513; sequence RLKEMEEKLD…DVACFFKSEN (253 aa). LRR repeat units follow at residues 595–616, 622–645, 646–670, 677–700, 723–747, 761–785, 790–813, 815–837, 838–861, 862–885, 888–904, and 905–930; these read MENV…TFDG, MCNL…IFKF, DTVR…PWEK, PENL…VKDT, AKNL…MENM, LTCL…KLEE, SENL…AGDL, RLVV…LGKQ, KALQ…VKDM, KHLR…SLKC, LSRN…LKDF, and SNLK…CLEY.

It carries out the reaction NAD(+) + H2O = ADP-D-ribose + nicotinamide + H(+). Functionally, TIR-NB-LRR receptor-like protein that may play a role in plant innate immunity. May trigger hypersensitive programmed cell death in response to pathogen attack. Involved in tolerance to tobacco ringspot virus (TRSV). The chain is Disease resistance protein LAZ5 from Arabidopsis thaliana (Mouse-ear cress).